A 581-amino-acid chain; its full sequence is Prolactin receptor (581 aa).

The first 24 residues, 1–24, serve as a signal peptide directing secretion; sequence MKENVASRAVFILLLFLNASLLNG. The Extracellular portion of the chain corresponds to 25 to 234; the sequence is QSPPGKPKII…QIPNDFPVND (210 aa). 2 Fibronectin type-III domains span residues 27 to 127 and 129 to 229; these read PPGK…IVEP and PPAN…IPND. A disulfide bridge links Cys-36 with Cys-46. N-linked (GlcNAc...) asparagine glycosylation occurs at Asn-59. Cys-75 and Cys-86 are joined by a disulfide. An N-linked (GlcNAc...) asparagine glycan is attached at Asn-132. The Zn(2+) site is built by Asp-211 and His-212. The WSXWS motif signature appears at 215 to 219; it reads WSEWS. A glycan (N-linked (GlcNAc...) asparagine) is linked at Asn-233. Residues 235–258 form a helical membrane-spanning segment; that stretch reads TTVWIFVAVLSAVICLIMVWAVAL. Residues 259 to 581 lie on the Cytoplasmic side of the membrane; sequence KGYSMMTCIL…PAKEAPPALP (323 aa). The Box 1 motif motif lies at 267-275; sequence ILPPVPGPK. Disordered stretches follow at residues 321 to 362 and 462 to 502; these read EDQQ…LFSE and LKPS…QDKT. A compositionally biased stretch (basic and acidic residues) spans 329 to 349; that stretch reads PSKEHMEQGVKPMHMDPDSDS.

This sequence belongs to the type I cytokine receptor family. Type 1 subfamily. In terms of assembly, interacts with SMARCA1. Interacts with NEK3 and VAV2 and this interaction is prolactin-dependent.

The protein localises to the membrane. Functionally, this is a receptor for the anterior pituitary hormone prolactin. The chain is Prolactin receptor (PRLR) from Cervus elaphus (Red deer).